Here is a 492-residue protein sequence, read N- to C-terminus: High-affinity nickel transport protein (492 aa).

At 1–24 the chain is on the cytoplasmic side; sequence MLSRWTRRVNESRLAQRKLTLLGR. A helical transmembrane segment spans residues 25 to 45; sequence AIALVVGELLFNAVCWIAAGI. Residues 46 to 50 lie on the Extracellular side of the membrane; it reads CFGKT. Residues 51–71 form a helical membrane-spanning segment; the sequence is DGILGLALLAWTIGLRHGLDA. Topologically, residues 72–94 are cytoplasmic; it reads DHISAIDNATRQLVSQGQLPITC. The helical transmembrane segment at 95-115 threads the bilayer; sequence GLFFSLGHSTIVIVVNVAIAV. Residues 116-136 are Extracellular-facing; the sequence is SVDIYDKLDRVGSIGGIVGAA. The chain crosses the membrane as a helical span at residues 137 to 157; that stretch reads VSASFLFLIACLNIYFLVGAI. The Cytoplasmic portion of the chain corresponds to 158 to 210; that stretch reads KQRRSMKRRQALGLPPDEDEGDPSKIYGGGCMVRVVGPILRAVDRPWKMYPVG. Residues 211-231 traverse the membrane as a helical segment; that stretch reads VLFGFGFDTASSIALLAISAI. At 232-239 the chain is on the extracellular side; sequence AQRGPNGD. A helical membrane pass occupies residues 240-260; that stretch reads AISHGKIVILPFLFTAGMSLV. Residues 261–382 are Cytoplasmic-facing; the sequence is DSLDSILMLY…AKANTMSSLS (122 aa). A helical membrane pass occupies residues 383–403; the sequence is IILTLLSILVALSISLIEIMG. Residues 404-439 lie on the Extracellular side of the membrane; it reads LIGDNCTQCQDAANDPDGGGLAGSWWRAWARANDQS. The N-linked (GlcNAc...) asparagine glycan is linked to Asn408. The helical transmembrane segment at 440-460 threads the bilayer; it reads GYIGAAIVGCFAAILAGWYGA. At 461–492 the chain is on the cytoplasmic side; the sequence is KWGKKKWKARRDANAAIVLEDNEDDAAETPVA.

Belongs to the NiCoT transporter (TC 2.A.52) family.

It is found in the cell membrane. High-affinity nickel-specific transporter responsible for nickel uptake and required for high levels of activity of urease URE1. Does not transport cobalt. Plays a role in host brain invasion. In Cryptococcus neoformans var. grubii serotype A (strain H99 / ATCC 208821 / CBS 10515 / FGSC 9487) (Filobasidiella neoformans var. grubii), this protein is High-affinity nickel transport protein.